A 477-amino-acid chain; its full sequence is ETS translocation variant 1 (477 aa).

Ser-94 is modified (phosphoserine). A disordered region spans residues 128-179 (PQVGMRPSNPPTPSSTPVSPLHHASPNTAHTPKPDRAFPAHLPPSQSIPDST). 2 positions are modified to phosphoserine; by RPS6KA1 and RPS6KA5: Ser-191 and Ser-216. Lys-317 participates in a covalent cross-link: Glycyl lysine isopeptide (Lys-Gly) (interchain with G-Cter in SUMO2). Residues 335–415 (LQLWQFLVAL…AGERYVYKFV (81 aa)) constitute a DNA-binding region (ETS).

The protein belongs to the ETS family. Sumoylated. In terms of processing, phosphorylated at Ser-191 and Ser-216 by RPS6KA1 and RPS6KA5; phosphorylation activates transcriptional activity. As to expression, abundant in kidney. Moderate levels seen in the heart, brain, lung, embryo and lower levels seen in spleen, intestine, testis and thymus.

Its subcellular location is the nucleus. In terms of biological role, transcriptional activator that binds to DNA sequences containing the consensus pentanucleotide 5'-CGGA[AT]-3'. Required for olfactory dopaminergic neuron differentiation; may directly activate expression of tyrosine hydroxylase (TH). The protein is ETS translocation variant 1 of Mus musculus (Mouse).